A 216-amino-acid chain; its full sequence is UPF0502 protein Ent638_1581 (216 aa).

It belongs to the UPF0502 family.

This is UPF0502 protein Ent638_1581 from Enterobacter sp. (strain 638).